Here is a 440-residue protein sequence, read N- to C-terminus: Tumor necrosis factor receptor superfamily member 10B (440 aa).

Disordered stretches follow at residues 1–32 (MEQR…RPGP) and 60–84 (DLAP…CPPG). An N-terminal signal peptide occupies residues 1–55 (MEQRGQNAPAASGARKRHGPGPREARGARPGPRVPKTLVLVVAAVLLLVSAESAL). Over 56-210 (ITQQDLAPQQ…SPGTPASPCS (155 aa)) the chain is Extracellular. 3 TNFR-Cys repeats span residues 57-94 (TQQD…GRDC), 97-137 (CKYG…NTVC), and 138-178 (QCEE…DIEC). Positions 60–71 (DLAPQQRAAPQQ) are enriched in low complexity. Intrachain disulfides connect C81/C94, C97/C113, C116/C129, C119/C137, C139/C153, C156/C170, and C160/C178. A TAPE repeat occupies 192–206 (PAVEETVTSSPGTPA). A helical membrane pass occupies residues 211–231 (LSGIIIGVTVAAVVLIVAVFV). Topologically, residues 232–440 (CKSLLWKKVL…LEGNADSAMS (209 aa)) are cytoplasmic. One can recognise a Death domain in the interval 339 to 422 (RQCFDDFADL…LAKQKIEDHL (84 aa)).

As to quaternary structure, monomer. Can interact with TRADD and RIPK1. Interacts with HCMV protein UL141; this interaction prevents TNFRSF10B cell surface expression. Two TNFRSF10B monomers interact with a UL141 homodimer. Three TNFRSF10B molecules interact with TNFSF10 homotrimer. In the absence of stimulation, interacts with BIRC2, DDX3X and GSK3B. The interaction with BIRC2 and DDX3X is further enhanced upon receptor stimulation and accompanied by DDX3X and BIRC2 cleavage. In terms of processing, (Microbial infection) Glycosylated on Arg residue by S.typhimurium protein Ssek3. As to expression, widely expressed in adult and fetal tissues; very highly expressed in tumor cell lines such as HeLaS3, K-562, HL-60, SW480, A-549 and G-361; highly expressed in heart, peripheral blood lymphocytes, liver, pancreas, spleen, thymus, prostate, ovary, uterus, placenta, testis, esophagus, stomach and throughout the intestinal tract; not detectable in brain.

Its subcellular location is the membrane. Its function is as follows. Receptor for the cytotoxic ligand TNFSF10/TRAIL. The adapter molecule FADD recruits caspase-8 to the activated receptor. The resulting death-inducing signaling complex (DISC) performs caspase-8 proteolytic activation which initiates the subsequent cascade of caspases (aspartate-specific cysteine proteases) mediating apoptosis. Promotes the activation of NF-kappa-B. Essential for ER stress-induced apoptosis. This is Tumor necrosis factor receptor superfamily member 10B (TNFRSF10B) from Homo sapiens (Human).